A 64-amino-acid polypeptide reads, in one-letter code: Alpha-conotoxin Lt14.1 (64 aa).

Positions 1–20 (MKLSVMFIVFLMLTMPMTCA) are cleaved as a signal peptide. Residues 21–50 (GISRSATNGGEADVRAHDKAANLMALLQER) constitute a propeptide that is removed on maturation. Disulfide bonds link Cys52–Cys60 and Cys56–Cys63. Residue Cys63 is modified to Cysteine amide.

This sequence belongs to the conotoxin L superfamily. Post-translationally, may contain a 4-hydroxyproline. In terms of tissue distribution, expressed by the venom duct.

The protein localises to the secreted. Functionally, alpha-conotoxins act on postsynaptic membranes, they bind to the nicotinic acetylcholine receptors (nAChR) and thus inhibit them. This synthetic peptide displays analgesic activity in a hot plate assay. Analgesia is also observed against second phase pain in formalin-induced inflammatory pain model, and in a rat model of mechanically-induced pain. Effects downstream of nAChR are inhibition of calcium influx, inhibition of ERK1/2 phosphorylation and inhibition of c-fos/NOS expression. Genes associated with drug dependence are not up-regulated by this toxin. Treatment with this toxin reversed morphine withdrawal symptoms in mice. This is Alpha-conotoxin Lt14.1 from Conus litteratus (Lettered cone).